A 285-amino-acid polypeptide reads, in one-letter code: Putative cytochrome c peroxidase, mitochondrial (285 aa).

The Proton acceptor role is filled by histidine 37. A heme b-binding site is contributed by histidine 161. The active-site Tryptophan radical intermediate is the tryptophan 177.

It belongs to the peroxidase family. Cytochrome c peroxidase subfamily. As to quaternary structure, forms a one-to-one complex with cytochrome c. It depends on heme b as a cofactor.

It localises to the mitochondrion matrix. The protein resides in the mitochondrion intermembrane space. The catalysed reaction is 2 Fe(II)-[cytochrome c] + H2O2 + 2 H(+) = 2 Fe(III)-[cytochrome c] + 2 H2O. In terms of biological role, destroys radicals which are normally produced within the cells and which are toxic to biological systems. The sequence is that of Putative cytochrome c peroxidase, mitochondrial from Yarrowia lipolytica (strain CLIB 122 / E 150) (Yeast).